We begin with the raw amino-acid sequence, 425 residues long: UPF0761 membrane protein xcc-b100_3490 (425 aa).

The next 6 helical transmembrane spans lie at 48–68 (VFAL…FPAF), 105–125 (FTVA…HSIE), 154–174 (GTML…LPLF), 182–202 (LAEF…IVLI), 216–236 (ALPG…GFGF), and 250–270 (ALSA…SVLL).

It belongs to the UPF0761 family.

The protein resides in the cell inner membrane. The polypeptide is UPF0761 membrane protein xcc-b100_3490 (Xanthomonas campestris pv. campestris (strain B100)).